The sequence spans 188 residues: ATP synthase subunit delta (188 aa).

The protein belongs to the ATPase delta chain family. As to quaternary structure, F-type ATPases have 2 components, F(1) - the catalytic core - and F(0) - the membrane proton channel. F(1) has five subunits: alpha(3), beta(3), gamma(1), delta(1), epsilon(1). F(0) has three main subunits: a(1), b(2) and c(10-14). The alpha and beta chains form an alternating ring which encloses part of the gamma chain. F(1) is attached to F(0) by a central stalk formed by the gamma and epsilon chains, while a peripheral stalk is formed by the delta and b chains.

The protein resides in the cell inner membrane. F(1)F(0) ATP synthase produces ATP from ADP in the presence of a proton or sodium gradient. F-type ATPases consist of two structural domains, F(1) containing the extramembraneous catalytic core and F(0) containing the membrane proton channel, linked together by a central stalk and a peripheral stalk. During catalysis, ATP synthesis in the catalytic domain of F(1) is coupled via a rotary mechanism of the central stalk subunits to proton translocation. Its function is as follows. This protein is part of the stalk that links CF(0) to CF(1). It either transmits conformational changes from CF(0) to CF(1) or is implicated in proton conduction. This chain is ATP synthase subunit delta, found in Agrobacterium fabrum (strain C58 / ATCC 33970) (Agrobacterium tumefaciens (strain C58)).